Here is a 332-residue protein sequence, read N- to C-terminus: MSDEKIINQPQDVVSEMLDGLTYAYGDLIEKVPDFEIIQRKSPKSGKVALVSGGGSGHKPAHAGFVGEGMLSAAVCGAIFTSPTPDQIYEAIKSADEGAGVLLIIKNYLGDVMNFEMAREMAEMEEIKVEQIIVDDDIAVENSLYTQGRRGVAGTVLVHKILGAAAHQEASLDEIKDLADKVVKNIKTIGLALSAATVPEVGKPGFVLDDNEIEYGVGIHSEPGYRREKMKTSYELATELVGKLKEEFKFEAGQKYGILVNGMGATPLMEQFIFMNDVAKLLTEENIEILFKKVGNYMTSIDMAGLSLTMIKLEDDQWLKNLNEDVKTISWG.

In terms of domain architecture, DhaK spans glutamine 9–tryptophan 331. Dihydroxyacetone contacts are provided by residues glycine 55–histidine 58, lysine 106, and aspartate 111. Catalysis depends on histidine 58, which acts as the Proton acceptor. Histidine 220 (tele-hemiaminal-histidine intermediate) is an active-site residue.

As to quaternary structure, homodimer. The dihydroxyacetone kinase complex is composed of a homodimer of DhaM, a homodimer of DhaK and the subunit DhaL.

It carries out the reaction dihydroxyacetone + phosphoenolpyruvate = dihydroxyacetone phosphate + pyruvate. Its pathway is polyol metabolism; glycerol degradation. In terms of biological role, dihydroxyacetone binding subunit of the dihydroxyacetone kinase, which is responsible the phosphoenolpyruvate (PEP)-dependent phosphorylation of dihydroxyacetone via a phosphoryl group transfer from DhaL-ATP. The polypeptide is PTS-dependent dihydroxyacetone kinase, dihydroxyacetone-binding subunit DhaK (Lactococcus lactis subsp. lactis (strain IL1403) (Streptococcus lactis)).